Consider the following 467-residue polypeptide: Constitutive acid phosphatase (467 aa).

The N-terminal stretch at 1-17 is a signal peptide; it reads MFKSVVYSVLAAALVNA. H75 serves as the catalytic Nucleophile. N97, N103, N162, N192, N250, and N315 each carry an N-linked (GlcNAc...) asparagine glycan. D338 acts as the Proton donor in catalysis. N356, N390, N439, N445, N456, and N461 each carry an N-linked (GlcNAc...) asparagine glycan.

It belongs to the histidine acid phosphatase family.

The enzyme catalyses a phosphate monoester + H2O = an alcohol + phosphate. This chain is Constitutive acid phosphatase (PHO3), found in Saccharomyces cerevisiae (strain ATCC 204508 / S288c) (Baker's yeast).